We begin with the raw amino-acid sequence, 358 residues long: tRNA N6-adenosine threonylcarbamoyltransferase (358 aa).

Fe cation-binding residues include histidine 122 and histidine 126. Residues 145–149 (LVSGG), aspartate 178, glycine 191, and asparagine 287 contribute to the substrate site. Aspartate 315 is a binding site for Fe cation.

Belongs to the KAE1 / TsaD family. The cofactor is Fe(2+).

It localises to the cytoplasm. It catalyses the reaction L-threonylcarbamoyladenylate + adenosine(37) in tRNA = N(6)-L-threonylcarbamoyladenosine(37) in tRNA + AMP + H(+). Required for the formation of a threonylcarbamoyl group on adenosine at position 37 (t(6)A37) in tRNAs that read codons beginning with adenine. Is involved in the transfer of the threonylcarbamoyl moiety of threonylcarbamoyl-AMP (TC-AMP) to the N6 group of A37, together with TsaE and TsaB. TsaD likely plays a direct catalytic role in this reaction. The sequence is that of tRNA N6-adenosine threonylcarbamoyltransferase from Hydrogenovibrio crunogenus (strain DSM 25203 / XCL-2) (Thiomicrospira crunogena).